The chain runs to 552 residues: 5'-AMP-activated protein kinase catalytic subunit alpha-2 (552 aa).

The Protein kinase domain occupies 16–268 (YVLGDTLGVG…IKDIREHEWF (253 aa)). Residues 22–30 (LGVGTFGKV) and Lys-45 each bind ATP. Residue Asp-139 is the Proton acceptor of the active site. At Thr-172 the chain carries Phosphothreonine; by LKB1 and CaMKK2. Phosphothreonine is present on Thr-258. An AIS region spans residues 291 to 376 (EAVKEVCEKF…PERMPPLIAD (86 aa)). Ser-377 bears the Phosphoserine mark. The disordered stretch occupies residues 478–520 (EQRSGSSTPQRSCSAAGLHRPRSSVDSSTAENHSLSGSLTGSL). Residues 480-490 (RSGSSTPQRSC) are compositionally biased toward polar residues. Ser-491 is subject to Phosphoserine. Residues 501–510 (SVDSSTAENH) show a composition bias toward polar residues. Residues 511-520 (SLSGSLTGSL) show a composition bias toward low complexity.

This sequence belongs to the protein kinase superfamily. CAMK Ser/Thr protein kinase family. SNF1 subfamily. AMPK is a heterotrimer of an alpha catalytic subunit (PRKAA1 or PRKAA2), a beta (PRKAB1 or PRKAB2) and a gamma non-catalytic subunits (PRKAG1, PRKAG2 or PRKAG3). Interacts with FNIP1 and FNIP2. Associates with internalized INSR complexes on Golgi/endosomal membranes; PRKAA2/AMPK2 together with ATIC and HACD3/PTPLAD1 is proposed to be part of a signaling network regulating INSR autophosphorylation and endocytosis. Interacts with DUSP29. Interacts with ARF6. The phosphorylated form at Thr-172 mediated by CamKK2 interacts with ACSS2. Mg(2+) serves as cofactor. In terms of processing, ubiquitinated. Post-translationally, phosphorylated at Thr-172 by STK11/LKB1 in complex with STE20-related adapter-alpha (STRADA) pseudo kinase and CAB39. Also phosphorylated at Thr-172 by CAMKK2; triggered by a rise in intracellular calcium ions, without detectable changes in the AMP/ATP ratio. CAMKK1 can also phosphorylate Thr-172, but at much lower level. Dephosphorylated by protein phosphatase 2A and 2C (PP2A and PP2C). Phosphorylated by ULK1; leading to negatively regulate AMPK activity and suggesting the existence of a regulatory feedback loop between ULK1 and AMPK. Dephosphorylated by PPM1A and PPM1B at Thr-172 (mediated by STK11/LKB1). As to expression, skeletal muscle, lower levels in liver, heart and kidney.

Its subcellular location is the cytoplasm. The protein localises to the nucleus. The enzyme catalyses L-seryl-[protein] + ATP = O-phospho-L-seryl-[protein] + ADP + H(+). It catalyses the reaction L-threonyl-[protein] + ATP = O-phospho-L-threonyl-[protein] + ADP + H(+). It carries out the reaction L-seryl-[acetyl-CoA carboxylase] + ATP = O-phospho-L-seryl-[acetyl-CoA carboxylase] + ADP + H(+). The catalysed reaction is L-seryl-[3-hydroxy-3-methylglutaryl-coenzyme A reductase] + ATP = O-phospho-L-seryl-[3-hydroxy-3-methylglutaryl-coenzyme A reductase] + ADP + H(+). Its activity is regulated as follows. Activated by phosphorylation on Thr-172. Binding of AMP to non-catalytic gamma subunit (PRKAG1, PRKAG2 or PRKAG3) results in allosteric activation, inducing phosphorylation on Thr-172. AMP-binding to gamma subunit also sustains activity by preventing dephosphorylation of Thr-172. ADP also stimulates Thr-172 phosphorylation, without stimulating already phosphorylated AMPK. ATP promotes dephosphorylation of Thr-172, rendering the enzyme inactive. Under physiological conditions AMPK mainly exists in its inactive form in complex with ATP, which is much more abundant than AMP. Selectively inhibited by compound C (6-[4-(2-Piperidin-1-yl-ethoxy)-phenyl)]-3-pyridin-4-yl-pyyrazolo[1,5-a] pyrimidine. Activated by resveratrol, a natural polyphenol present in red wine, and S17834, a synthetic polyphenol. Salicylate/aspirin directly activates kinase activity, primarily by inhibiting Thr-172 dephosphorylation. Catalytic subunit of AMP-activated protein kinase (AMPK), an energy sensor protein kinase that plays a key role in regulating cellular energy metabolism. In response to reduction of intracellular ATP levels, AMPK activates energy-producing pathways and inhibits energy-consuming processes: inhibits protein, carbohydrate and lipid biosynthesis, as well as cell growth and proliferation. AMPK acts via direct phosphorylation of metabolic enzymes, and by longer-term effects via phosphorylation of transcription regulators. Regulates lipid synthesis by phosphorylating and inactivating lipid metabolic enzymes such as ACACA, ACACB, GYS1, HMGCR and LIPE; regulates fatty acid and cholesterol synthesis by phosphorylating acetyl-CoA carboxylase (ACACA and ACACB) and hormone-sensitive lipase (LIPE) enzymes, respectively. Promotes lipolysis of lipid droplets by mediating phosphorylation of isoform 1 of CHKA (CHKalpha2). Regulates insulin-signaling and glycolysis by phosphorylating IRS1, PFKFB2 and PFKFB3. Involved in insulin receptor/INSR internalization. AMPK stimulates glucose uptake in muscle by increasing the translocation of the glucose transporter SLC2A4/GLUT4 to the plasma membrane, possibly by mediating phosphorylation of TBC1D4/AS160. Regulates transcription and chromatin structure by phosphorylating transcription regulators involved in energy metabolism such as CRTC2/TORC2, FOXO3, histone H2B, HDAC5, MEF2C, MLXIPL/ChREBP, EP300, HNF4A, p53/TP53, SREBF1, SREBF2 and PPARGC1A. Acts as a key regulator of glucose homeostasis in liver by phosphorylating CRTC2/TORC2, leading to CRTC2/TORC2 sequestration in the cytoplasm. In response to stress, phosphorylates 'Ser-36' of histone H2B (H2BS36ph), leading to promote transcription. Acts as a key regulator of cell growth and proliferation by phosphorylating FNIP1, TSC2, RPTOR, WDR24 and ATG1/ULK1: in response to nutrient limitation, negatively regulates the mTORC1 complex by phosphorylating RPTOR component of the mTORC1 complex and by phosphorylating and activating TSC2. Also phosphorylates and inhibits GATOR2 subunit WDR24 in response to nutrient limitation, leading to suppress glucose-mediated mTORC1 activation. In response to energetic stress, phosphorylates FNIP1, inactivating the non-canonical mTORC1 signaling, thereby promoting nuclear translocation of TFEB and TFE3, and inducing transcription of lysosomal or autophagy genes. In response to nutrient limitation, promotes autophagy by phosphorylating and activating ATG1/ULK1. In that process, it also activates WDR45/WIPI4. Phosphorylates CASP6, thereby preventing its autoprocessing and subsequent activation. AMPK also acts as a regulator of circadian rhythm by mediating phosphorylation of CRY1, leading to destabilize it. May regulate the Wnt signaling pathway by phosphorylating CTNNB1, leading to stabilize it. Also acts as a regulator of cellular polarity by remodeling the actin cytoskeleton; probably by indirectly activating myosin. Also phosphorylates CFTR, EEF2K, KLC1, NOS3 and SLC12A1. Plays an important role in the differential regulation of pro-autophagy (composed of PIK3C3, BECN1, PIK3R4 and UVRAG or ATG14) and non-autophagy (composed of PIK3C3, BECN1 and PIK3R4) complexes, in response to glucose starvation. Can inhibit the non-autophagy complex by phosphorylating PIK3C3 and can activate the pro-autophagy complex by phosphorylating BECN1. Upon glucose starvation, promotes ARF6 activation in a kinase-independent manner leading to cell migration. Upon glucose deprivation mediates the phosphorylation of ACSS2 at 'Ser-659', which exposes the nuclear localization signal of ACSS2, required for its interaction with KPNA1 and nuclear translocation. Upon stress, regulates mitochondrial fragmentation through phosphorylation of MTFR1L. This chain is 5'-AMP-activated protein kinase catalytic subunit alpha-2 (Prkaa2), found in Rattus norvegicus (Rat).